The primary structure comprises 458 residues: Serine protease HTRA2, mitochondrial (458 aa).

The N-terminal 31 residues, 1–31 (MAALRAGRGAGWSLRGWRALWGGRWGKGPLL), are a transit peptide targeting the mitochondrion. A propeptide spanning residues 32–133 (TPDLRALLTS…GGRGPPAVLA (102 aa)) is cleaved from the precursor. The helical transmembrane segment at 105 to 125 (VWLAVALGAGGAVLLLFWGGG) threads the bilayer. The IAP-binding motif signature appears at 134-137 (SVLG). Positions 166–342 (ILGRHPFSGR…IPSDRLREFL (177 aa)) are serine protease. Residues His198, Asp228, and Ser306 each act as charge relay system in the active site. A PDZ domain is found at 364-445 (VMMLTLTPSI…QLAVRIRRGQ (82 aa)).

The protein belongs to the peptidase S1C family. As to quaternary structure, homotrimer. Interacts with MXI2. Interacts with THAP5 under apoptotic conditions. The mature protein, but not the precursor, binds to BIRC2/c-IAP1, BIRC3/c-IAP2 and XIAP/BIRC4. Interacts with BIRC6/bruce. Interacts with AREL1 (via HECT domain); in the cytoplasm following induction of apoptosis. In terms of processing, ubiquitinated by BIRC6; this activity is inhibited by DIABLO/SMAC. Autoproteolytically activated.

The protein localises to the mitochondrion intermembrane space. It localises to the mitochondrion membrane. It catalyses the reaction Cleavage of non-polar aliphatic amino-acids at the P1 position, with a preference for Val, Ile and Met. At the P2 and P3 positions, Arg is selected most strongly with a secondary preference for other hydrophilic residues.. With respect to regulation, inhibited by BIRC6. Functionally, serine protease that shows proteolytic activity against a non-specific substrate beta-casein. Promotes apoptosis by either relieving the inhibition of BIRC proteins on caspases, leading to an increase in caspase activity; or by a BIRC inhibition-independent, caspase-independent and serine protease activity-dependent mechanism. Cleaves BIRC6 and relieves its inhibition on CASP3, CASP7 and CASP9, but it is also prone to inhibition by BIRC6. Cleaves THAP5 and promotes its degradation during apoptosis. This chain is Serine protease HTRA2, mitochondrial (HTRA2), found in Bos taurus (Bovine).